Reading from the N-terminus, the 140-residue chain is 3-hydroxyacyl-[acyl-carrier-protein] dehydratase FabZ (140 aa).

Residue His-47 is part of the active site.

The protein belongs to the thioester dehydratase family. FabZ subfamily.

It localises to the cytoplasm. It catalyses the reaction a (3R)-hydroxyacyl-[ACP] = a (2E)-enoyl-[ACP] + H2O. In terms of biological role, involved in unsaturated fatty acids biosynthesis. Catalyzes the dehydration of short chain beta-hydroxyacyl-ACPs and long chain saturated and unsaturated beta-hydroxyacyl-ACPs. This is 3-hydroxyacyl-[acyl-carrier-protein] dehydratase FabZ from Streptococcus pneumoniae serotype 4 (strain ATCC BAA-334 / TIGR4).